Reading from the N-terminus, the 315-residue chain is Ribose-phosphate pyrophosphokinase (315 aa).

ATP-binding positions include 41–43 and 100–101; these read DGE and RQ. Mg(2+)-binding residues include histidine 134 and aspartate 173. Lysine 196 is a catalytic residue. D-ribose 5-phosphate-binding positions include arginine 198, aspartate 222, and 226–230; that span reads DTAGT.

This sequence belongs to the ribose-phosphate pyrophosphokinase family. Class I subfamily. As to quaternary structure, homohexamer. It depends on Mg(2+) as a cofactor.

It is found in the cytoplasm. It carries out the reaction D-ribose 5-phosphate + ATP = 5-phospho-alpha-D-ribose 1-diphosphate + AMP + H(+). The protein operates within metabolic intermediate biosynthesis; 5-phospho-alpha-D-ribose 1-diphosphate biosynthesis; 5-phospho-alpha-D-ribose 1-diphosphate from D-ribose 5-phosphate (route I): step 1/1. Involved in the biosynthesis of the central metabolite phospho-alpha-D-ribosyl-1-pyrophosphate (PRPP) via the transfer of pyrophosphoryl group from ATP to 1-hydroxyl of ribose-5-phosphate (Rib-5-P). In Bacillus caldolyticus, this protein is Ribose-phosphate pyrophosphokinase.